We begin with the raw amino-acid sequence, 849 residues long: G-type lectin S-receptor-like serine/threonine-protein kinase B120 (849 aa).

The N-terminal stretch at 1–25 (MRFFRKTSLYLSLFLYFFLYESSMA) is a signal peptide. The 128-residue stretch at 26–153 (ANTIRRGESL…DTDRPIWESF (128 aa)) folds into the Bulb-type lectin domain. Over 26-438 (ANTIRRGESL…SEVGENRKTK (413 aa)) the chain is Extracellular. Residues asparagine 110, asparagine 191, asparagine 210, asparagine 230, asparagine 273, and asparagine 282 are each glycosylated (N-linked (GlcNAc...) asparagine). In terms of domain architecture, EGF-like; atypical spans 295–332 (PDSECDQYNRCGKFGICDMKGSNGICSCIHGYEQVSVG). Cystine bridges form between cysteine 299–cysteine 311 and cysteine 305–cysteine 320. N-linked (GlcNAc...) asparagine glycans are attached at residues asparagine 333, asparagine 349, and asparagine 388. The region spanning 346–427 (CERNISVGED…GGSSLHIRLA (82 aa)) is the PAN domain. Disulfide bonds link cysteine 381/cysteine 402 and cysteine 385/cysteine 391. The helical transmembrane segment at 439–459 (IAVIVAVLVGVILIGIFALLL) threads the bilayer. The Cytoplasmic segment spans residues 460–849 (WRFKRKKDVS…EITSTVVLGR (390 aa)). The Protein kinase domain occupies 529–814 (FCKENELGRG…TLAAPRQPTF (286 aa)). Residues 535–543 (LGRGGFGPV) and lysine 557 contribute to the ATP site. Serine 563 is modified (phosphoserine). Residues 618–635 (TKQALIDWKLRFSIIEGI) form a caM-binding region. Aspartate 654 acts as the Proton acceptor in catalysis. Phosphoserine occurs at positions 658 and 671. Threonine 688 is subject to Phosphothreonine. Phosphoserine occurs at positions 732 and 837. Residue threonine 844 is modified to Phosphothreonine.

The protein belongs to the protein kinase superfamily. Ser/Thr protein kinase family.

The protein localises to the cell membrane. It carries out the reaction L-seryl-[protein] + ATP = O-phospho-L-seryl-[protein] + ADP + H(+). The catalysed reaction is L-threonyl-[protein] + ATP = O-phospho-L-threonyl-[protein] + ADP + H(+). In Arabidopsis thaliana (Mouse-ear cress), this protein is G-type lectin S-receptor-like serine/threonine-protein kinase B120 (B120).